A 140-amino-acid chain; its full sequence is Histone H2B (140 aa).

A compositionally biased stretch (basic and acidic residues) spans 1-10; it reads MPPKAAEKKP. The disordered stretch occupies residues 1 to 48; it reads MPPKAAEKKPSTGGKAPAGKAPAEKKEAGKKTAAAASGDKKKRGKTRK. N6-acetyllysine; alternate occurs at positions 8 and 9. Residues lysine 8 and lysine 9 each participate in a glycyl lysine isopeptide (Lys-Gly) (interchain with G-Cter in SUMO); alternate cross-link. Low complexity predominate over residues 11–21; it reads STGGKAPAGKA. At lysine 15 the chain carries N6-acetyllysine. Residue lysine 25 is modified to N6-acetyllysine; alternate. Lysine 25 is covalently cross-linked (Glycyl lysine isopeptide (Lys-Gly) (interchain with G-Cter in SUMO); alternate). Residue lysine 26 forms a Glycyl lysine isopeptide (Lys-Gly) (interchain with G-Cter in SUMO) linkage. Lysine 134 is covalently cross-linked (Glycyl lysine isopeptide (Lys-Gly) (interchain with G-Cter in ubiquitin)).

The protein belongs to the histone H2B family. The nucleosome is a histone octamer containing two molecules each of H2A, H2B, H3 and H4 assembled in one H3-H4 heterotetramer and two H2A-H2B heterodimers. The octamer wraps approximately 147 bp of DNA. Monoubiquitinated by the ubc2-bre1 complex to form H2BK123ub1. H2BK123ub1 gives a specific tag for epigenetic transcriptional activation and is also prerequisite for H3K4me and H3K79me formation. H2BK123ub1 also modulates the formation of double-strand breaks during meiosis and is a prerequisite for DNA-damage checkpoint activation. Post-translationally, acetylated by gcn5 to form H2BK11ac and H2BK16ac. H2BK16ac can also be formed by esa1. Acetylation of N-terminal lysines and particularly formation of H2BK11acK16ac has a positive effect on transcription. In terms of processing, sumoylation to form H2BK6su or H2BK7su, and probably also H2BK16su or H2BK17su, occurs preferentially near the telomeres and represses gene transcription.

Its subcellular location is the nucleus. It is found in the chromosome. Core component of nucleosome. Nucleosomes wrap and compact DNA into chromatin, limiting DNA accessibility to the cellular machineries which require DNA as a template. Histones thereby play a central role in transcription regulation, DNA repair, DNA replication and chromosomal stability. DNA accessibility is regulated via a complex set of post-translational modifications of histones, also called histone code, and nucleosome remodeling. The sequence is that of Histone H2B (htb1) from Aspergillus clavatus (strain ATCC 1007 / CBS 513.65 / DSM 816 / NCTC 3887 / NRRL 1 / QM 1276 / 107).